The primary structure comprises 411 residues: Probable G-protein coupled receptor AH9.1 (411 aa).

The Cytoplasmic portion of the chain corresponds to 1-18 (MLLFLLRRIFDCRYKYKL). The chain crosses the membrane as a helical span at residues 19-39 (FVKALVLFLTIVYNAGLVHFF). Residues 40–55 (FRTTSLDDSPEMNHVD) lie on the Extracellular side of the membrane. Residues 56-76 (YVAHVIVMPIVLSIGMINQCL) form a helical membrane-spanning segment. Over 77–87 (NVCTLLHIRTS) the chain is Cytoplasmic. A helical transmembrane segment spans residues 88–108 (IFLYLKASAIADILSIVAFIP). At 109 to 131 (FLFRHAKLIDPSWELGMFYHAHL) the chain is on the extracellular side. A helical transmembrane segment spans residues 132 to 152 (ELPLINALISASALNIVAMTV). At 153-176 (DRYVSVCHPIKFFQNNETKPSRRR) the chain is on the cytoplasmic side. Residues 177–197 (TMLIIVMIYFIALMIYFPSVF) form a helical membrane-spanning segment. Over 198 to 229 (QKKLGVVTDALTNKTIYTIVRNEDVEALQVFK) the chain is Extracellular. Residue asparagine 210 is glycosylated (N-linked (GlcNAc...) asparagine). Residues 230 to 250 (FYLIVRECICRWGPVLLLVIL) form a helical membrane-spanning segment. Residues 251-299 (NMCVVRGLRKIDKRNWFWRQPSQNSRTETLAQRQLRSPRDDRSRISVLL) lie on the Cytoplasmic side of the membrane. Residues 300-320 (FVTSATFIICNIPASVISFFV) form a helical membrane-spanning segment. At 321 to 333 (RRVSGSLFWQIFR) the chain is on the extracellular side. A helical transmembrane segment spans residues 334–354 (AIANLLQVTSYLYNFYLYALC). The Cytoplasmic portion of the chain corresponds to 355 to 411 (SSEYRHAFLRLFGCRSSLSPTSTGDSPTVRVSVHGKRCHQAVVLLGNENHENPVDEV).

Belongs to the G-protein coupled receptor 1 family.

It localises to the cell membrane. Its function is as follows. Not known. Putative receptor. The polypeptide is Probable G-protein coupled receptor AH9.1 (Caenorhabditis elegans).